Reading from the N-terminus, the 133-residue chain is MAFRLSSAVLLAALVAAPAYAAPTTTTKVDIAAFDPDKDGTIDLKEALAAGSAAFDKLDPDKDGTLDAKELKGRVSEADLKKLDPDNDGTLDKKEYLAAVEAQFKAANPDNDGTIDARELASPAGSALVNLIR.

The first 21 residues, 1–21 (MAFRLSSAVLLAALVAAPAYA), serve as a signal peptide directing secretion. Positions 35, 37, 39, 41, 46, 59, 61, 63, 65, 70, 84, 86, 88, 90, 95, 108, 110, 112, 114, and 119 each coordinate Nd(3+). EF-hand domains are found at residues 35–46 (DPDKDGTIDLKE), 59–70 (DPDKDGTLDAKE), 84–95 (DPDNDGTLDKKE), and 108–119 (NPDNDGTIDARE).

Monomer.

Its subcellular location is the periplasm. High-affinity lanthanide (Ln)-binding protein. Shows 100 million-fold selectivity for La(3+) over Ca(2+). Binds 3 equiv of Ln(3+) with picomolar affinity and a fourth with approximately micromolar affinity. May be involved in receiving and then transporting lanthanides (such as La(3+), Nd(3+) and Sm(3+)) to a specific periplasmic destination. The protein is Lanmodulin of Methylorubrum extorquens (strain ATCC 14718 / DSM 1338 / JCM 2805 / NCIMB 9133 / AM1) (Methylobacterium extorquens).